The primary structure comprises 426 residues: Diaminobutyrate--2-oxoglutarate transaminase (426 aa).

An N6-(pyridoxal phosphate)lysine modification is found at K274.

This sequence belongs to the class-III pyridoxal-phosphate-dependent aminotransferase family. Pyridoxal 5'-phosphate serves as cofactor.

It catalyses the reaction L-2,4-diaminobutanoate + 2-oxoglutarate = L-aspartate 4-semialdehyde + L-glutamate. Its pathway is amine and polyamine biosynthesis; ectoine biosynthesis; L-ectoine from L-aspartate 4-semialdehyde: step 1/3. In terms of biological role, catalyzes reversively the conversion of L-aspartate beta-semialdehyde (ASA) to L-2,4-diaminobutyrate (DABA) by transamination with L-glutamate. This chain is Diaminobutyrate--2-oxoglutarate transaminase (ectB), found in Oceanobacillus iheyensis (strain DSM 14371 / CIP 107618 / JCM 11309 / KCTC 3954 / HTE831).